The chain runs to 138 residues: Ig heavy chain V region TEPC 1017 (138 aa).

The first 20 residues, 1 to 20, serve as a signal peptide directing secretion; it reads MGWSYIILFLVATATDVHSQ. Residues 21-49 form a framework-1 region; sequence VQLQQPGAELVKPGASVQLSCKASGHTFT. A disulfide bridge connects residues Cys41 and Cys115. The tract at residues 50 to 54 is complementarity-determining-1; the sequence is NYWIH. Residues 55 to 68 form a framework-2 region; the sequence is WVKQRPGQGLEWIG. Positions 69-85 are complementarity-determining-2; the sequence is EINPNDGRSNYNEKFKN. Positions 86–117 are framework-3; sequence KATLTVDKSSSTAYMQLSSLTPEEFAVYYCAR. The complementarity-determining-3 stretch occupies residues 118-127; sequence SDGYYDWFVY. The tract at residues 128–138 is framework-4; that stretch reads WGQGTLVTFSA.

The sequence is that of Ig heavy chain V region TEPC 1017 from Mus musculus (Mouse).